A 234-amino-acid chain; its full sequence is Phosphoglycolate phosphatase (234 aa).

The Nucleophile role is filled by Asp8. Positions 8 and 10 each coordinate Mg(2+). Lys157 serves as a coordination point for substrate. Asp180 and Asp184 together coordinate Mg(2+).

Belongs to the archaeal SPP-like hydrolase family. Mg(2+) serves as cofactor.

It catalyses the reaction 2-phosphoglycolate + H2O = glycolate + phosphate. Its function is as follows. Catalyzes the dephosphorylation of 2-phosphoglycolate. This chain is Phosphoglycolate phosphatase, found in Methanoculleus marisnigri (strain ATCC 35101 / DSM 1498 / JR1).